Reading from the N-terminus, the 662-residue chain is MSSNLQLVETFDSRQFVVARWNRNDTTAMVPSAIAVVVFVESVEYKLGCKEKIGYSPTPEDQDQFMILQMESIDEANRICHDSIAKGFAINNTKIVFTPLLGLNGFRLQDAIDFMKTSQPHFNNDELLEVLTMAICQELPERLKILEDGFSFIEQGVSELIQNSACEMFGSFASPVRRNGYSDIDINVESVSAPGQRVSTNVRPLNEVVANPKCLITHPLTKSELETYPQEEIIKILYRCFNENSAFKTKFEMRFLPARTPIIVFKNIEVEGMNVSYDLSVHNQISVEKASLLHEFIVKDKSKGSRMKNAMMFIVHWAKSNKLLSGDYPEEKLEVKTKLNSYIINQLVIHFVQAATNKVHVNPQAKRDSRVNEYNFDTLFGDYCKFFRELFKYYANFDFTNKAIYGKKAMQKKTLSSAHGGVEESPLMLMDPMDITHNISAKVTEDAVKLLNGLIRNALFILKQNHFHINYLLETNTMATMLMKSREPKISISTRVTDGAEHQYLSVQLPAVVITSSDLFLLLTRVLRFNVCPNEQGPSVVDLCTPTGAIFLVTSRAWVGRRNTKRALKNSRHDLTPLQIDVMCSDKYDYEEDIAELRISMSTVPGTRIRLACIDIMRGQVSEVRDAIHFLIDQFINNNYDDLEKNGVQTISRIPIAAPTWP.

Mg(2+) is bound by residues D183 and D185. Positions 384-437 constitute a PAP-associated domain; the sequence is CKFFRELFKYYANFDFTNKAIYGKKAMQKKTLSSAHGGVEESPLMLMDPMDITH.

It belongs to the DNA polymerase type-B-like family. In terms of assembly, forms a complex composed of sart-3, terminal uridylyltransferase usip-1 and U6 snRNA; complex formation is mediated by usip-1 and sart-3 binding to U6 snRNA. Requires Mg(2+) as cofactor. Mn(2+) serves as cofactor. In terms of tissue distribution, ubiquitously expressed.

Its subcellular location is the nucleus. The protein resides in the nucleoplasm. The enzyme catalyses RNA(n) + UTP = RNA(n)-3'-uridine ribonucleotide + diphosphate. In terms of biological role, acts as a specific terminal uridylyltransferase for U6 snRNA. Responsible for the addition of UTP at the 3' end of U6 snRNA which stabilizes U6 snRNA. Does not have activity towards modified uridine containing 3'-monophosphorylation or 2'-O-methylation. The protein is U6 snRNA-specific terminal uridylyltransferase of Caenorhabditis elegans.